The following is a 565-amino-acid chain: Phosphomethylpyrimidine synthase (565 aa).

Residues Asn-201, Met-230, Tyr-259, His-295, 315–317 (SRG), 356–359 (DGLR), and Glu-395 contribute to the substrate site. His-399 is a Zn(2+) binding site. Tyr-422 is a substrate binding site. His-463 is a binding site for Zn(2+). [4Fe-4S] cluster-binding residues include Cys-543, Cys-546, and Cys-551.

This sequence belongs to the ThiC family. As to quaternary structure, homodimer. [4Fe-4S] cluster is required as a cofactor.

It catalyses the reaction 5-amino-1-(5-phospho-beta-D-ribosyl)imidazole + S-adenosyl-L-methionine = 4-amino-2-methyl-5-(phosphooxymethyl)pyrimidine + CO + 5'-deoxyadenosine + formate + L-methionine + 3 H(+). The protein operates within cofactor biosynthesis; thiamine diphosphate biosynthesis. Functionally, catalyzes the synthesis of the hydroxymethylpyrimidine phosphate (HMP-P) moiety of thiamine from aminoimidazole ribotide (AIR) in a radical S-adenosyl-L-methionine (SAM)-dependent reaction. The chain is Phosphomethylpyrimidine synthase from Ehrlichia canis (strain Jake).